The chain runs to 354 residues: Phospho-N-acetylmuramoyl-pentapeptide-transferase (354 aa).

Helical transmembrane passes span A27–L47, T73–V93, L97–Y117, F138–V158, L162–G182, G193–A213, A230–F250, A256–V276, I282–V302, and T331–L351.

Belongs to the glycosyltransferase 4 family. MraY subfamily. Mg(2+) serves as cofactor.

It is found in the cell inner membrane. It carries out the reaction UDP-N-acetyl-alpha-D-muramoyl-L-alanyl-gamma-D-glutamyl-meso-2,6-diaminopimeloyl-D-alanyl-D-alanine + di-trans,octa-cis-undecaprenyl phosphate = di-trans,octa-cis-undecaprenyl diphospho-N-acetyl-alpha-D-muramoyl-L-alanyl-D-glutamyl-meso-2,6-diaminopimeloyl-D-alanyl-D-alanine + UMP. The protein operates within cell wall biogenesis; peptidoglycan biosynthesis. In terms of biological role, catalyzes the initial step of the lipid cycle reactions in the biosynthesis of the cell wall peptidoglycan: transfers peptidoglycan precursor phospho-MurNAc-pentapeptide from UDP-MurNAc-pentapeptide onto the lipid carrier undecaprenyl phosphate, yielding undecaprenyl-pyrophosphoryl-MurNAc-pentapeptide, known as lipid I. This Novosphingobium aromaticivorans (strain ATCC 700278 / DSM 12444 / CCUG 56034 / CIP 105152 / NBRC 16084 / F199) protein is Phospho-N-acetylmuramoyl-pentapeptide-transferase.